We begin with the raw amino-acid sequence, 504 residues long: Histidine ammonia-lyase (504 aa).

A cross-link (5-imidazolinone (Ala-Gly)) is located at residues 142-144 (ASG). Serine 143 bears the 2,3-didehydroalanine (Ser) mark.

The protein belongs to the PAL/histidase family. Contains an active site 4-methylidene-imidazol-5-one (MIO), which is formed autocatalytically by cyclization and dehydration of residues Ala-Ser-Gly.

Its subcellular location is the cytoplasm. It carries out the reaction L-histidine = trans-urocanate + NH4(+). It functions in the pathway amino-acid degradation; L-histidine degradation into L-glutamate; N-formimidoyl-L-glutamate from L-histidine: step 1/3. This Staphylococcus aureus (strain USA300) protein is Histidine ammonia-lyase.